Reading from the N-terminus, the 360-residue chain is DNA replication and repair protein RecF (360 aa).

Glycine 33–threonine 40 lines the ATP pocket.

Belongs to the RecF family.

The protein resides in the cytoplasm. Functionally, the RecF protein is involved in DNA metabolism; it is required for DNA replication and normal SOS inducibility. RecF binds preferentially to single-stranded, linear DNA. It also seems to bind ATP. The protein is DNA replication and repair protein RecF of Rickettsia canadensis (strain McKiel).